The chain runs to 495 residues: Phosphomethylpyrimidine synthase (495 aa).

Substrate is bound by residues Asn125, Met154, Tyr183, His219, 239–241 (SRG), 280–283 (DGLR), and Glu319. His323 serves as a coordination point for Zn(2+). Residue Tyr346 coordinates substrate. His387 is a binding site for Zn(2+). Positions 467, 470, and 475 each coordinate [4Fe-4S] cluster.

It belongs to the ThiC family. It depends on [4Fe-4S] cluster as a cofactor.

The catalysed reaction is 5-amino-1-(5-phospho-beta-D-ribosyl)imidazole + S-adenosyl-L-methionine = 4-amino-2-methyl-5-(phosphooxymethyl)pyrimidine + CO + 5'-deoxyadenosine + formate + L-methionine + 3 H(+). The protein operates within cofactor biosynthesis; thiamine diphosphate biosynthesis. Catalyzes the synthesis of the hydroxymethylpyrimidine phosphate (HMP-P) moiety of thiamine from aminoimidazole ribotide (AIR) in a radical S-adenosyl-L-methionine (SAM)-dependent reaction. This Leptospira interrogans serogroup Icterohaemorrhagiae serovar Lai (strain 56601) protein is Phosphomethylpyrimidine synthase.